A 37-amino-acid polypeptide reads, in one-letter code: MKVRPSVKPICEKCKVIKRKGKVMVICENPKHKQRQG.

This sequence belongs to the bacterial ribosomal protein bL36 family.

The protein is Large ribosomal subunit protein bL36 of Staphylococcus aureus (strain Mu3 / ATCC 700698).